Consider the following 79-residue polypeptide: Small ribosomal subunit protein uS17 (79 aa).

The protein belongs to the universal ribosomal protein uS17 family. Part of the 30S ribosomal subunit.

Functionally, one of the primary rRNA binding proteins, it binds specifically to the 5'-end of 16S ribosomal RNA. The sequence is that of Small ribosomal subunit protein uS17 from Mesorhizobium japonicum (strain LMG 29417 / CECT 9101 / MAFF 303099) (Mesorhizobium loti (strain MAFF 303099)).